Reading from the N-terminus, the 144-residue chain is Small ribosomal subunit protein uS9 (144 aa).

N-acetylthreonine is present on Thr2. The segment at 124–144 (RRESKKFGGPGARARYQKSYR) is disordered.

The protein belongs to the universal ribosomal protein uS9 family.

In Caenorhabditis elegans, this protein is Small ribosomal subunit protein uS9 (rps-16).